Consider the following 134-residue polypeptide: MLSPKKTKYRKQHRGRLKGACSRGNRISFGKFAIQALEPAWITSGQIEAGRRAITRTTRRGIKIWIRIFPDKPITKKPADTRMGSGKGDPKFWVAVVKPGRMLYEMGRISESVARKAAQNVAYKMCLHTRFVKI.

It belongs to the universal ribosomal protein uL16 family. In terms of assembly, part of the 50S ribosomal subunit.

The protein localises to the plastid. Its subcellular location is the chloroplast. The polypeptide is Large ribosomal subunit protein uL16c (Gnetum parvifolium (Small-leaved jointfir)).